The primary structure comprises 206 residues: Small ribosomal subunit protein uS4 (206 aa).

One can recognise an S4 RNA-binding domain in the interval Thr96–Ile156.

This sequence belongs to the universal ribosomal protein uS4 family. As to quaternary structure, part of the 30S ribosomal subunit. Contacts protein S5. The interaction surface between S4 and S5 is involved in control of translational fidelity.

One of the primary rRNA binding proteins, it binds directly to 16S rRNA where it nucleates assembly of the body of the 30S subunit. In terms of biological role, with S5 and S12 plays an important role in translational accuracy. In Shewanella woodyi (strain ATCC 51908 / MS32), this protein is Small ribosomal subunit protein uS4.